The chain runs to 538 residues: Syncytin-2 (538 aa).

The signal sequence occupies residues 1–15; the sequence is MGLLLLLLILTPLLA. The Extracellular portion of the chain corresponds to 16 to 478; that stretch reads AYCHPDFRLL…GWLNWEGTWK (463 aa). The CXXC motif lies at 43–46; sequence CWLC. 3 disulfides stabilise this stretch: cysteine 43-cysteine 46, cysteine 43-cysteine 439, and cysteine 431-cysteine 438. Residues asparagine 146, asparagine 177, asparagine 220, asparagine 241, asparagine 247, asparagine 312, and asparagine 332 are each glycosylated (N-linked (GlcNAc...) asparagine). The fusion peptide stretch occupies residues 354–374; sequence LIPLLVGLGIVGSAGTGIAGI. Residues 414–430 carry the CKS-17 motif; sequence LQNRRGLDMLTAAQGGI. Positions 431-439 match the CX6CC motif; sequence CLALDEKCC. N-linked (GlcNAc...) asparagine glycosylation is present at asparagine 443. The helical transmembrane segment at 479 to 499 threads the bilayer; it reads WFSWVLPFTGPLVSLLLLLLF. The Cytoplasmic segment spans residues 500–538; the sequence is GPCLLNLITQFVSSRLQATKLQMKLNKRVHPRNSQESPF.

It belongs to the gamma type-C retroviral envelope protein family. HERV class-I FRD env subfamily. As to quaternary structure, the surface and transmembrane proteins form a heterodimer. They are attached by non-covalent interactions or by a labile interchain disulfide bond. Post-translationally, specific enzymatic cleavages in vivo yield the mature SU and TM proteins. In terms of processing, the CXXC motif is highly conserved across a broad range of retroviral envelope proteins. It is thought to participate in the formation of a labile disulfide bond possibly with the CX6CC motif present in the transmembrane protein.

It localises to the virion. The protein localises to the cell membrane. In terms of biological role, this endogenous retroviral envelope protein has retained its original fusogenic properties and participates in trophoblast fusion and the formation of a syncytium during placenta morphogenesis. The interaction with MFSD2A is apparently important for this process. Functionally, endogenous envelope proteins may have kept, lost or modified their original function during evolution but this one can still make pseudotypes with MLV, HIV-1 or SIV-1 virions and confer infectivity. Retroviral envelope proteins mediate receptor recognition and membrane fusion during early infection. The surface protein mediates receptor recognition, while the transmembrane protein anchors the envelope heterodimer to the viral membrane through one transmembrane domain. The other hydrophobic domain, called fusion peptide, mediates fusion of the viral membrane with the target cell membrane. The protein is Syncytin-2 (ERVFRD-1) of Callithrix jacchus (White-tufted-ear marmoset).